The chain runs to 827 residues: Glycerol-3-phosphate acyltransferase (827 aa).

Positions 309-314 (CHRSHI) match the HXXXXD motif motif.

This sequence belongs to the GPAT/DAPAT family.

Its subcellular location is the cell inner membrane. The enzyme catalyses sn-glycerol 3-phosphate + an acyl-CoA = a 1-acyl-sn-glycero-3-phosphate + CoA. It participates in phospholipid metabolism; CDP-diacylglycerol biosynthesis; CDP-diacylglycerol from sn-glycerol 3-phosphate: step 1/3. The protein is Glycerol-3-phosphate acyltransferase of Ectopseudomonas mendocina (strain ymp) (Pseudomonas mendocina).